A 196-amino-acid polypeptide reads, in one-letter code: Molybdenum cofactor guanylyltransferase (196 aa).

GTP-binding positions include 10–12 (LAG), Lys-23, Asn-51, Asp-69, and Asp-99. Position 99 (Asp-99) interacts with Mg(2+).

This sequence belongs to the MobA family. As to quaternary structure, monomer. Mg(2+) is required as a cofactor.

The protein localises to the cytoplasm. It carries out the reaction Mo-molybdopterin + GTP + H(+) = Mo-molybdopterin guanine dinucleotide + diphosphate. In terms of biological role, transfers a GMP moiety from GTP to Mo-molybdopterin (Mo-MPT) cofactor (Moco or molybdenum cofactor) to form Mo-molybdopterin guanine dinucleotide (Mo-MGD) cofactor. In Shewanella loihica (strain ATCC BAA-1088 / PV-4), this protein is Molybdenum cofactor guanylyltransferase.